A 497-amino-acid chain; its full sequence is Probable D-lactate dehydrogenase, mitochondrial (497 aa).

One can recognise an FAD-binding PCMH-type domain in the interval 65–246 (HRCRPPDVVV…TKATLRLYGV (182 aa)).

Belongs to the FAD-binding oxidoreductase/transferase type 4 family. FAD serves as cofactor.

Its subcellular location is the mitochondrion. The enzyme catalyses (R)-lactate + 2 Fe(III)-[cytochrome c] = 2 Fe(II)-[cytochrome c] + pyruvate + 2 H(+). In terms of biological role, involved in D-lactate, but not L-lactate catabolic process. This chain is Probable D-lactate dehydrogenase, mitochondrial (ldhd), found in Danio rerio (Zebrafish).